The primary structure comprises 96 residues: Large ribosomal subunit protein uL23 (96 aa).

This sequence belongs to the universal ribosomal protein uL23 family. In terms of assembly, part of the 50S ribosomal subunit. Contacts protein L29, and trigger factor when it is bound to the ribosome.

One of the early assembly proteins it binds 23S rRNA. One of the proteins that surrounds the polypeptide exit tunnel on the outside of the ribosome. Forms the main docking site for trigger factor binding to the ribosome. The protein is Large ribosomal subunit protein uL23 of Solidesulfovibrio magneticus (strain ATCC 700980 / DSM 13731 / RS-1) (Desulfovibrio magneticus).